The chain runs to 133 residues: Profilin-4 (133 aa).

Cysteines 13 and 117 form a disulfide. Positions 83 to 99 (AVIRGKKGSGGITIKKT) match the Involved in PIP2 interaction motif. Thr113 carries the phosphothreonine modification.

The protein belongs to the profilin family. As to quaternary structure, occurs in many kinds of cells as a complex with monomeric actin in a 1:1 ratio. In terms of processing, phosphorylated by MAP kinases.

Its subcellular location is the cytoplasm. It localises to the cytoskeleton. Its function is as follows. Binds to actin and affects the structure of the cytoskeleton. At high concentrations, profilin prevents the polymerization of actin, whereas it enhances it at low concentrations. This chain is Profilin-4, found in Corylus avellana (European hazel).